Consider the following 931-residue polypeptide: Isoleucine--tRNA ligase (931 aa).

Positions 57–67 (PFANGNIHMGH) match the 'HIGH' region motif. Glutamate 556 serves as a coordination point for L-isoleucyl-5'-AMP. Residues 597-601 (KMSKS) carry the 'KMSKS' region motif. ATP is bound at residue lysine 600. Residues cysteine 890, cysteine 893, cysteine 910, and cysteine 913 each contribute to the Zn(2+) site.

Belongs to the class-I aminoacyl-tRNA synthetase family. IleS type 1 subfamily. As to quaternary structure, monomer. Requires Zn(2+) as cofactor.

Its subcellular location is the cytoplasm. The catalysed reaction is tRNA(Ile) + L-isoleucine + ATP = L-isoleucyl-tRNA(Ile) + AMP + diphosphate. Catalyzes the attachment of isoleucine to tRNA(Ile). As IleRS can inadvertently accommodate and process structurally similar amino acids such as valine, to avoid such errors it has two additional distinct tRNA(Ile)-dependent editing activities. One activity is designated as 'pretransfer' editing and involves the hydrolysis of activated Val-AMP. The other activity is designated 'posttransfer' editing and involves deacylation of mischarged Val-tRNA(Ile). The chain is Isoleucine--tRNA ligase from Lactobacillus delbrueckii subsp. bulgaricus (strain ATCC 11842 / DSM 20081 / BCRC 10696 / JCM 1002 / NBRC 13953 / NCIMB 11778 / NCTC 12712 / WDCM 00102 / Lb 14).